A 626-amino-acid polypeptide reads, in one-letter code: Colicin-Ib (626 aa).

A compositionally biased stretch (polar residues) spans 276 to 286; it reads QQLTQQKNTPD. The segment at 276–308 is disordered; sequence QQLTQQKNTPDGKTIVSPEKFPGRSSTNHSIVV. A helical membrane pass occupies residues 588 to 612; the sequence is FSVMLGTPVGILGFAIIMAAVSALV.

This sequence belongs to the channel forming colicin family.

The protein localises to the host membrane. In terms of biological role, this colicin is a channel-forming colicin. This class of transmembrane toxins depolarize the cytoplasmic membrane, leading to dissipation of cellular energy. Functionally, colicins are polypeptide toxins produced by and active against E.coli and closely related bacteria. The chain is Colicin-Ib (cib) from Escherichia coli.